Consider the following 1011-residue polypeptide: Unconventional myosin ID (1011 aa).

Residues Ala-7–Asn-690 enclose the Myosin motor domain. Gly-100–Thr-107 provides a ligand contact to ATP. Positions Met-567–Asp-589 are actin-binding. IQ domains lie at Pro-694–Lys-714 and Met-716–Gln-736. The TH1 domain occupies Ala-806–Ala-1007.

It belongs to the TRAFAC class myosin-kinesin ATPase superfamily. Myosin family. In terms of assembly, binds to F-actin. Interacts with arm. Interacts with shg. Interacts with ds (via intracellular region). In terms of tissue distribution, in the embryo, expressed in gastric caeca, midgut cells of the proventriculus, and in the mid and hindgut. In the larval gut brush border, expression is in the terminal web domain. In the adult gut brush border, expression remains in the web domain and has also moved into the microvilli. Also expressed at low levels in follicle cells during oogenesis.

The protein resides in the cytoplasm. It is found in the cell cortex. It localises to the cytoskeleton. The protein localises to the cell membrane. Its subcellular location is the cell junction. The protein resides in the adherens junction. It is found in the cell projection. In terms of biological role, unconventional myosin that functions as actin-based motor protein with ATPase activity. Binds to membranes enriched in phosphatidylinositol 4-5-bisphosphate, and can glide along actin filaments when anchored to a lipid bilayer. Generates left-right asymmetry at the level of single cells, organs and the whole body via its interaction with the actin cytoskeleton, both in the embryo and the adult. Normal left-right asymmetry of the larval midgut and hindgut requires expression in the embryonic hindgut epithelium during a critical time period, 10 to 12.75 hours after egg laying. This period corresponds to a late stage of germband retraction, and precedes left-right asymmetric morphogenesis. Expression in segment H1 of the imaginal ring is required at 0 to 24 hours after pupation for changes of cell shape and orientation in the H2 segment, which then gives rise to normal, dextral looping of the adult hindgut. Required during a critical period, 126-132 hours after egg laying, for normal, dextral rotation of the adult male genitalia. Has a double role by promoting dextral rotation in the posterior compartment of segment A8 of the male genital disk, and in repressing sinistral looping in the anterior compartment. The polypeptide is Unconventional myosin ID (Drosophila melanogaster (Fruit fly)).